We begin with the raw amino-acid sequence, 458 residues long: tRNA modification GTPase MnmE (458 aa).

Residues Arg26, Glu88, and Arg127 each coordinate (6S)-5-formyl-5,6,7,8-tetrahydrofolate. A TrmE-type G domain is found at 224–378 (GLSTAIIGRP…IEDRINQLFF (155 aa)). Asn234 provides a ligand contact to K(+). Residues 234 to 239 (NVGKSS), 253 to 259 (TDIAGTT), and 278 to 281 (DTAG) each bind GTP. Ser238 contributes to the Mg(2+) binding site. Residues Thr253, Ile255, and Thr258 each contribute to the K(+) site. Residue Thr259 participates in Mg(2+) binding. Lys458 serves as a coordination point for (6S)-5-formyl-5,6,7,8-tetrahydrofolate.

Belongs to the TRAFAC class TrmE-Era-EngA-EngB-Septin-like GTPase superfamily. TrmE GTPase family. Homodimer. Heterotetramer of two MnmE and two MnmG subunits. K(+) serves as cofactor.

It localises to the cytoplasm. Its function is as follows. Exhibits a very high intrinsic GTPase hydrolysis rate. Involved in the addition of a carboxymethylaminomethyl (cmnm) group at the wobble position (U34) of certain tRNAs, forming tRNA-cmnm(5)s(2)U34. This Streptococcus pyogenes serotype M3 (strain ATCC BAA-595 / MGAS315) protein is tRNA modification GTPase MnmE.